A 381-amino-acid polypeptide reads, in one-letter code: Methanesulfonate monooxygenase (381 aa).

Belongs to the SsuD family.

It carries out the reaction an alkanesulfonate + FMNH2 + O2 = an aldehyde + FMN + sulfite + H2O + 2 H(+). Its function is as follows. Catalyzes the desulfonation of aliphatic sulfonates. Shows highest activity with methanesulfonate. In Pseudomonas aeruginosa (strain ATCC 15692 / DSM 22644 / CIP 104116 / JCM 14847 / LMG 12228 / 1C / PRS 101 / PAO1), this protein is Methanesulfonate monooxygenase (msuD).